The chain runs to 873 residues: Bifunctional heparan sulfate N-deacetylase/N-sulfotransferase 3 (873 aa).

At 1 to 13 the chain is on the cytoplasmic side; it reads MSFIMKLHRHFQR. Residues 14 to 34 traverse the membrane as a helical; Signal-anchor for type II membrane protein segment; it reads TVILLATFCMVSIIISAYYLY. The Lumenal segment spans residues 35 to 873; that stretch reads SGYKQENELS…WLRQELQKVR (839 aa). The segment at 36-589 is heparan sulfate N-deacetylase 3; that stretch reads GYKQENELSE…KRHRDIWSKE (554 aa). N-linked (GlcNAc...) asparagine glycosylation is found at Asn146, Asn226, Asn342, and Asn392. Residues 590–873 are heparan sulfate N-sulfotransferase 3; it reads KTCDRLPKFL…WLRQELQKVR (284 aa). Lys605 (for sulfotransferase activity) is an active-site residue. 605–609 provides a ligand contact to 3'-phosphoadenylyl sulfate; the sequence is KTGTT. Residue Asn658 is glycosylated (N-linked (GlcNAc...) asparagine). Ser703 is a binding site for 3'-phosphoadenylyl sulfate. Residue Asn794 is glycosylated (N-linked (GlcNAc...) asparagine). Cys809 and Cys819 are joined by a disulfide. 824–828 contacts 3'-phosphoadenylyl sulfate; sequence KGRKY.

It belongs to the sulfotransferase 1 family. NDST subfamily. As to quaternary structure, monomer. As to expression, expressed in brain, kidney, liver, fetal and adult lung, adult pancreas, placenta, fetal spleen and fetal thymus. Not detected in adult/ fetal heart and skeletal muscle.

The protein resides in the golgi apparatus membrane. The catalysed reaction is alpha-D-glucosaminyl-[heparan sulfate](n) + 3'-phosphoadenylyl sulfate = N-sulfo-alpha-D-glucosaminyl-[heparan sulfate](n) + adenosine 3',5'-bisphosphate + 2 H(+). It functions in the pathway glycan metabolism; heparan sulfate biosynthesis. It participates in glycan metabolism; heparin biosynthesis. Essential bifunctional enzyme that catalyzes both the N-deacetylation and the N-sulfation of glucosamine (GlcNAc) of the glycosaminoglycan in heparan sulfate. Modifies the GlcNAc-GlcA disaccharide repeating sugar backbone to make N-sulfated heparosan, a prerequisite substrate for later modifications in heparin biosynthesis. Has high deacetylase activity but low sulfotransferase activity. The protein is Bifunctional heparan sulfate N-deacetylase/N-sulfotransferase 3 of Homo sapiens (Human).